Consider the following 226-residue polypeptide: Ribose-5-phosphate isomerase A (226 aa).

Residues 26–29 (TGST), 82–85 (DGAD), and 95–98 (KGGG) each bind substrate. Glu-104 (proton acceptor) is an active-site residue. Lys-122 contributes to the substrate binding site.

It belongs to the ribose 5-phosphate isomerase family. In terms of assembly, homodimer.

The catalysed reaction is aldehydo-D-ribose 5-phosphate = D-ribulose 5-phosphate. It functions in the pathway carbohydrate degradation; pentose phosphate pathway; D-ribose 5-phosphate from D-ribulose 5-phosphate (non-oxidative stage): step 1/1. In terms of biological role, catalyzes the reversible conversion of ribose-5-phosphate to ribulose 5-phosphate. The chain is Ribose-5-phosphate isomerase A from Streptococcus thermophilus (strain CNRZ 1066).